Here is a 657-residue protein sequence, read N- to C-terminus: Kinesin-like protein KIF22 (657 aa).

Residues 1–33 (MNVRAKKKPQQREMASASSGPSRSLSKGGVSRR) are disordered. Residues 16–33 (SASSGPSRSLSKGGVSRR) show a composition bias toward low complexity. A Kinesin motor domain is found at 38–360 (RVRVAVRLRP…LNFTARSKEV (323 aa)). Residue 119-126 (GPTGAGKT) coordinates ATP. Positions 388–415 (PSEAKKAKGPEEESTGSPESTAAPASAS) are disordered. Residues 402–415 (TGSPESTAAPASAS) are compositionally biased toward low complexity. 3 positions are modified to phosphoserine: Ser-404, Ser-419, and Ser-444. A Glycyl lysine isopeptide (Lys-Gly) (interchain with G-Cter in SUMO2) cross-link involves residue Lys-457. Residues 457–502 (KRERMVLIKTVEEKNLEIERLKMKQKELEAKVLAQEALDPKEKENT) are a coiled coil. A phosphoserine mark is found at Ser-537, Ser-554, and Ser-573.

Belongs to the TRAFAC class myosin-kinesin ATPase superfamily. Kinesin family. In terms of assembly, interacts with FAM83D and SIAH1. Post-translationally, ubiquitinated; mediated by SIAH1 and leading to its subsequent proteasomal degradation.

The protein resides in the nucleus. It is found in the cytoplasm. It localises to the cytoskeleton. In terms of biological role, kinesin family member that is involved in spindle formation and the movements of chromosomes during mitosis and meiosis. Binds to microtubules and to DNA. Plays a role in congression of laterally attached chromosomes in NDC80-depleted cells. The chain is Kinesin-like protein KIF22 (Kif22) from Rattus norvegicus (Rat).